Here is a 495-residue protein sequence, read N- to C-terminus: Inner membrane ALBINO3-like protein 1, chloroplastic (495 aa).

The helical transmembrane segment at 76–96 (LGAIYVLADASASTAAAAVMP) threads the bilayer. At 97–206 (TAVDSAAGAA…VLYEQAGVNP (110 aa)) the chain is on the stromal side. Residues 207–227 (LAGCLPTLATIPIFIGLFSSL) traverse the membrane as a helical segment. Residues 228-273 (TNVANDGLLDTQGFYFVPSLAGPTTMAMRQSGLGTSWLWPLGPDGA) lie on the Lumenal side of the membrane. Residues 274–294 (PPIGWEDAAAYLTLPLLLVAV) traverse the membrane as a helical segment. The Stromal segment spans residues 295 to 317 (QYASSSVTSPPIDPKDENANTQR). Residues 318–338 (ALLVFLPLMVGWFSLNVPAGL) traverse the membrane as a helical segment. Residues 339–441 (SLYYLANTVL…ASVSLSVDDS (103 aa)) lie on the Lumenal side of the membrane. The chain crosses the membrane as a helical span at residues 442 to 462 (TAAIAGTATMAVTAGAPAAAM). Residues 463-495 (DPSKVNRRCKRRRLTSLVQDGSTASAAVAGASA) lie on the Stromal side of the membrane.

It belongs to the OXA1/ALB3/YidC (TC 2.A.9.2) family. Associates with the LHCII complex and with the psaE subunit of the LHCI complex.

The protein resides in the plastid. Its subcellular location is the chloroplast thylakoid membrane. Functionally, required for the insertion of some light-harvesting complexes (LHC) proteins into the chloroplast thylakoid membrane. Essential for the assembly and activity of LHC I and II. Its function is probably partly distinct from that of ALB3.2. The polypeptide is Inner membrane ALBINO3-like protein 1, chloroplastic (ALB3.1) (Chlamydomonas reinhardtii (Chlamydomonas smithii)).